We begin with the raw amino-acid sequence, 675 residues long: MDVKSKHGHIKSNPEESLLFRNSVSKNIAQLSSINYADRNVQAALEQLSERKFKNEREARKQLPFEVFSDLIWTNGSIIKELSELSSQTLSVQSQLLKVKNSIDSYKNEWSKKTNDAQILLNSYETFCEEEALIEEKLKNIEIFEKNFVIMDDDLIHLTSSTDVDDRFYLILDKAQEIHDSSDSLFASLSGFVEYSSFEEIVKKMSRYIEAAFEKLFRCVQTELSDPQTAQTLEANSHLKKAFTKLFSEPTMVNKSINLIVQARQQILSTAYLTALTRGDFLSSSRPIELSAPDTVRFIGDLLAWIHQTIVNEKELVEALFAARKRQIQLNPFPPWDVPNVLEDQMNSLLDGSLYGICRPLSSRAQTSVLDLSDIVRLYNVIEILGFYREAFSKIVHDECIILRIIKTLEDFTYQRMKTVLDDELYTISNTNLSITDDLLPPDFVTTFLRNANSIFKIRGASLSVQGVDELPFKMLFMQLFDRILEICAAMTEDVRPPYKGIILMLNVLDSCTNYVGRYTFLNELFEYLQEKTTYYKNNLTTLLNNDYIAQAGLSDLLQKIADTTDDKQALKNYLHSWKWDQQIDKFSTFIRKTLSETIDNLQLLTSPIVTNQVLKETAISFVGAIETVDKALELSNLERRWPLSTEELLIAMNVDSMDTLSDIGQSDIDNLSVN.

This sequence belongs to the COG6 family.

It localises to the cytoplasm. Its subcellular location is the nucleus. It is found in the golgi apparatus membrane. Functionally, acts as a component of the peripheral membrane COG complex that is involved in intra-Golgi protein trafficking. COG is located at the cis-Golgi, and regulates tethering of retrograde intra-Golgi vesicles and possibly a number of other membrane trafficking events. This chain is Conserved oligomeric Golgi complex subunit 6 (cog6), found in Schizosaccharomyces pombe (strain 972 / ATCC 24843) (Fission yeast).